Consider the following 152-residue polypeptide: 2-C-methyl-D-erythritol 2,4-cyclodiphosphate synthase (152 aa).

Residues Asp8 and His10 each coordinate a divalent metal cation. 4-CDP-2-C-methyl-D-erythritol 2-phosphate is bound by residues 8 to 10 (DSH) and 34 to 35 (HS). His42 provides a ligand contact to a divalent metal cation. Residues 56–58 (DIG), 61–65 (FPDTD), 100–106 (LDRPKLG), and 131–135 (FKTSE) contribute to the 4-CDP-2-C-methyl-D-erythritol 2-phosphate site.

It belongs to the IspF family. Homotrimer. A divalent metal cation is required as a cofactor.

It carries out the reaction 4-CDP-2-C-methyl-D-erythritol 2-phosphate = 2-C-methyl-D-erythritol 2,4-cyclic diphosphate + CMP. It participates in isoprenoid biosynthesis; isopentenyl diphosphate biosynthesis via DXP pathway; isopentenyl diphosphate from 1-deoxy-D-xylulose 5-phosphate: step 4/6. In terms of biological role, involved in the biosynthesis of isopentenyl diphosphate (IPP) and dimethylallyl diphosphate (DMAPP), two major building blocks of isoprenoid compounds. Catalyzes the conversion of 4-diphosphocytidyl-2-C-methyl-D-erythritol 2-phosphate (CDP-ME2P) to 2-C-methyl-D-erythritol 2,4-cyclodiphosphate (ME-CPP) with a corresponding release of cytidine 5-monophosphate (CMP). This chain is 2-C-methyl-D-erythritol 2,4-cyclodiphosphate synthase, found in Thermus thermophilus (strain ATCC 27634 / DSM 579 / HB8).